Here is a 422-residue protein sequence, read N- to C-terminus: Dihydroorotase (422 aa).

Residues His61 and His63 each contribute to the Zn(2+) site. Residues 63–65 (HLR) and Asn95 contribute to the substrate site. Asp153 serves as a coordination point for Zn(2+). Substrate is bound at residue Asn278. Asp305 serves as a coordination point for Zn(2+). Asp305 is an active-site residue. Substrate contacts are provided by residues His309 and 322-323 (PG).

This sequence belongs to the metallo-dependent hydrolases superfamily. DHOase family. Class I DHOase subfamily. In terms of assembly, monomer. Forms a 1:1 stoichiometric complex with PyrB. The complex exists as an equilibrium mixture of heterohexamers, composed of 3 PyrC and 3 PyrB subunits, and dodecamers. The complex has both DHOase and ATCase activities. The cofactor is Zn(2+).

It carries out the reaction (S)-dihydroorotate + H2O = N-carbamoyl-L-aspartate + H(+). It functions in the pathway pyrimidine metabolism; UMP biosynthesis via de novo pathway; (S)-dihydroorotate from bicarbonate: step 3/3. With respect to regulation, the monomer has very low activity by itself. Activated several thousandfold by formation of a complex with PyrB aspartate carbamoyltransferase (ATCase). In terms of biological role, catalyzes the reversible cyclization of carbamoyl aspartate to dihydroorotate. The polypeptide is Dihydroorotase (Aquifex aeolicus (strain VF5)).